An 898-amino-acid polypeptide reads, in one-letter code: Alanine--tRNA ligase (898 aa).

His582, His586, Cys685, and His689 together coordinate Zn(2+).

This sequence belongs to the class-II aminoacyl-tRNA synthetase family. It depends on Zn(2+) as a cofactor.

The protein localises to the cytoplasm. The enzyme catalyses tRNA(Ala) + L-alanine + ATP = L-alanyl-tRNA(Ala) + AMP + diphosphate. Catalyzes the attachment of alanine to tRNA(Ala) in a two-step reaction: alanine is first activated by ATP to form Ala-AMP and then transferred to the acceptor end of tRNA(Ala). Also edits incorrectly charged Ser-tRNA(Ala) and Gly-tRNA(Ala) via its editing domain. This chain is Alanine--tRNA ligase, found in Mycolicibacterium vanbaalenii (strain DSM 7251 / JCM 13017 / BCRC 16820 / KCTC 9966 / NRRL B-24157 / PYR-1) (Mycobacterium vanbaalenii).